Consider the following 274-residue polypeptide: Hydroxyethylthiazole kinase (274 aa).

Position 54 (Met54) interacts with substrate. ATP-binding residues include Arg129 and Thr175. Position 202 (Gly202) interacts with substrate.

Belongs to the Thz kinase family. Requires Mg(2+) as cofactor.

It catalyses the reaction 5-(2-hydroxyethyl)-4-methylthiazole + ATP = 4-methyl-5-(2-phosphooxyethyl)-thiazole + ADP + H(+). It functions in the pathway cofactor biosynthesis; thiamine diphosphate biosynthesis; 4-methyl-5-(2-phosphoethyl)-thiazole from 5-(2-hydroxyethyl)-4-methylthiazole: step 1/1. Functionally, catalyzes the phosphorylation of the hydroxyl group of 4-methyl-5-beta-hydroxyethylthiazole (THZ). The sequence is that of Hydroxyethylthiazole kinase from Granulibacter bethesdensis (strain ATCC BAA-1260 / CGDNIH1).